The chain runs to 352 residues: Quinolinate synthase (352 aa).

Positions 48 and 69 each coordinate iminosuccinate. Cys114 contributes to the [4Fe-4S] cluster binding site. Iminosuccinate is bound by residues 140–142 (YAN) and Ser157. Residue Cys201 coordinates [4Fe-4S] cluster. Residues 227–229 (HPE) and Thr244 contribute to the iminosuccinate site. Cys298 provides a ligand contact to [4Fe-4S] cluster.

Belongs to the quinolinate synthase family. Type 1 subfamily. It depends on [4Fe-4S] cluster as a cofactor.

The protein localises to the cytoplasm. The enzyme catalyses iminosuccinate + dihydroxyacetone phosphate = quinolinate + phosphate + 2 H2O + H(+). It functions in the pathway cofactor biosynthesis; NAD(+) biosynthesis; quinolinate from iminoaspartate: step 1/1. In terms of biological role, catalyzes the condensation of iminoaspartate with dihydroxyacetone phosphate to form quinolinate. The sequence is that of Quinolinate synthase from Pseudomonas entomophila (strain L48).